The sequence spans 403 residues: Phosphopentomutase (403 aa).

Residues Asp-13, Asp-298, His-303, Asp-339, His-340, and His-351 each coordinate Mn(2+).

The protein belongs to the phosphopentomutase family. Requires Mn(2+) as cofactor.

It is found in the cytoplasm. The catalysed reaction is 2-deoxy-alpha-D-ribose 1-phosphate = 2-deoxy-D-ribose 5-phosphate. It catalyses the reaction alpha-D-ribose 1-phosphate = D-ribose 5-phosphate. The protein operates within carbohydrate degradation; 2-deoxy-D-ribose 1-phosphate degradation; D-glyceraldehyde 3-phosphate and acetaldehyde from 2-deoxy-alpha-D-ribose 1-phosphate: step 1/2. Its function is as follows. Isomerase that catalyzes the conversion of deoxy-ribose 1-phosphate (dRib-1-P) and ribose 1-phosphate (Rib-1-P) to deoxy-ribose 5-phosphate (dRib-5-P) and ribose 5-phosphate (Rib-5-P), respectively. This Streptococcus pneumoniae serotype 2 (strain D39 / NCTC 7466) protein is Phosphopentomutase.